The following is a 475-amino-acid chain: Tetratricopeptide repeat protein 29 (475 aa).

7 TPR repeats span residues 92 to 131 (DALR…EDAE), 136 to 173 (FEDV…AQLI), 182 to 215 (AEAH…TQGR), 234 to 267 (LRTY…AKEG), 274 to 307 (GEAS…STEL), 314 to 347 (GRAY…ARNN), and 354 to 387 (VRAS…TVEL). Residues 436-475 (DIEPDPVTEEFRGSTVETVSQNSEHLEELSRFPGDQKNET) form a disordered region. Positions 459–475 (EHLEELSRFPGDQKNET) are enriched in basic and acidic residues.

It localises to the cytoplasm. The protein resides in the cytoskeleton. It is found in the flagellum axoneme. Its function is as follows. Axonemal protein which is implicated in axonemal and/or peri-axonemal structure assembly and regulates flagellum assembly and beating and therefore sperm motility. This chain is Tetratricopeptide repeat protein 29 (TTC29), found in Macaca fascicularis (Crab-eating macaque).